Consider the following 270-residue polypeptide: MLPPLKKGWQATLDLRFHQAGGKTVLASAQHVGPLTVQRPFYPEEETCHLYLLHPPGGIVGGDELTISAHLAPGCHTLITMPGASKFYRSSGAQALVRQQLTLAPQATLEWLPQDAIFFPGANARLFTTFHLCASSRLLAWDLLCLGRPVIGETFSHGTLSNRLEVWVDNEPLLVERLHLQEGELSSIAERPWVGTLLCYPATDALLDGVRDALAPLGLYAGASLTDRLLTVRFLSDDNLICQRVMRDVWQFLRPHLTGKSPVLPRIWLT.

It belongs to the UreD family. As to quaternary structure, ureD, UreF and UreG form a complex that acts as a GTP-hydrolysis-dependent molecular chaperone, activating the urease apoprotein by helping to assemble the nickel containing metallocenter of UreC. The complex may form in the order UreABCD, UreABCDF, UreABCDFG. The UreE protein probably delivers the nickel in a GTPase-dependent fashion.

The protein resides in the cytoplasm. Functionally, necessary for the functional incorporation of the urease nickel metallocenter. The polypeptide is Urease accessory protein UreD (Klebsiella aerogenes (Enterobacter aerogenes)).